A 373-amino-acid chain; its full sequence is MMVRVMRYKKVPVKKIVNKIIDECDVILLVLDARDPEMTRNRELEKKIKAKGKKLIYVLNKADLVPKDILEKWKEVFGENTVFVSAKRRLGTKILREMIKQSLKEMGKKEGKVGIVGYPNVGKSSIINALTGKRKALTGSVAGLTKGEQWVRLTKNIKLMDTPGVLEMRDEDDLVISGALRLEKVENPIPPALKILSRINNFDNSIIKEYFGVDYEEVDEELLKKIGNKRSYLTKGGEVDLVRTAKTIIKEYQDGKLNYYKVDLKKYGQDRERDISFITKYLKDFPFIEDAKMIVTHLKDFDGLYKKIKKPVLGSEEIDGNIVVVSFGEKTKDACRKKVENLCRERNIEVLSKFGDKIGANNIYVAVGKRVKE.

The region spanning 14 to 168 is the CP-type G domain; it reads KKIVNKIIDE…LMDTPGVLEM (155 aa). 117-124 contacts GTP; sequence GYPNVGKS.

Belongs to the TRAFAC class YlqF/YawG GTPase family.

This is an uncharacterized protein from Methanocaldococcus jannaschii (strain ATCC 43067 / DSM 2661 / JAL-1 / JCM 10045 / NBRC 100440) (Methanococcus jannaschii).